Reading from the N-terminus, the 243-residue chain is DNA repair protein RecO (243 aa).

The protein belongs to the RecO family.

Functionally, involved in DNA repair and RecF pathway recombination. The sequence is that of DNA repair protein RecO from Bartonella quintana (strain Toulouse) (Rochalimaea quintana).